The primary structure comprises 484 residues: Rho guanine nucleotide exchange factor 35 (484 aa).

Residues 139-418 (FSSDLGSEEE…ALIAPEDSPH (280 aa)) are disordered. At Ser184 the chain carries Phosphoserine. Low complexity predominate over residues 217–237 (ESQGLLHPQEVQVLEEQGQQE). The span at 266 to 278 (NDEKGEQKQKQEQ) shows a compositional bias: basic and acidic residues. Over residues 299 to 309 (GLNDGEWEQED) the composition is skewed to acidic residues. 2 stretches are compositionally biased toward basic and acidic residues: residues 323-368 (GEER…KEKG) and 394-404 (RSREEENEHHG).

This chain is Rho guanine nucleotide exchange factor 35 (ARHGEF35), found in Homo sapiens (Human).